Here is a 320-residue protein sequence, read N- to C-terminus: Tyrosine recombinase XerC (320 aa).

Positions 14-104 (ADVREAVASW…SLRSFARHLE (91 aa)) constitute a Core-binding (CB) domain. The Tyr recombinase domain occupies 125–311 (RLPRPLPVAA…DSARLMSAFE (187 aa)). Active-site residues include Arg170, Lys195, His263, Arg266, and His289. Catalysis depends on Tyr298, which acts as the O-(3'-phospho-DNA)-tyrosine intermediate.

This sequence belongs to the 'phage' integrase family. XerC subfamily. Forms a cyclic heterotetrameric complex composed of two molecules of XerC and two molecules of XerD.

The protein resides in the cytoplasm. Its function is as follows. Site-specific tyrosine recombinase, which acts by catalyzing the cutting and rejoining of the recombining DNA molecules. The XerC-XerD complex is essential to convert dimers of the bacterial chromosome into monomers to permit their segregation at cell division. It also contributes to the segregational stability of plasmids. The chain is Tyrosine recombinase XerC from Methylobacterium sp. (strain 4-46).